We begin with the raw amino-acid sequence, 273 residues long: NH(3)-dependent NAD(+) synthetase (273 aa).

46–53 (GISGGQDS) contacts ATP. A Mg(2+)-binding site is contributed by D52. R139 lines the deamido-NAD(+) pocket. T159 is a binding site for ATP. E164 contributes to the Mg(2+) binding site. Residues K172 and D179 each contribute to the deamido-NAD(+) site. Residues K188 and T210 each contribute to the ATP site. 259-260 (HK) contacts deamido-NAD(+).

This sequence belongs to the NAD synthetase family. Homodimer.

The enzyme catalyses deamido-NAD(+) + NH4(+) + ATP = AMP + diphosphate + NAD(+) + H(+). Its pathway is cofactor biosynthesis; NAD(+) biosynthesis; NAD(+) from deamido-NAD(+) (ammonia route): step 1/1. In terms of biological role, catalyzes the ATP-dependent amidation of deamido-NAD to form NAD. Uses ammonia as a nitrogen source. In Streptococcus agalactiae serotype Ia (strain ATCC 27591 / A909 / CDC SS700), this protein is NH(3)-dependent NAD(+) synthetase.